Here is a 310-residue protein sequence, read N- to C-terminus: Methionyl-tRNA formyltransferase (310 aa).

Ser111–Pro114 is a binding site for (6S)-5,6,7,8-tetrahydrofolate.

It belongs to the Fmt family.

It carries out the reaction L-methionyl-tRNA(fMet) + (6R)-10-formyltetrahydrofolate = N-formyl-L-methionyl-tRNA(fMet) + (6S)-5,6,7,8-tetrahydrofolate + H(+). In terms of biological role, attaches a formyl group to the free amino group of methionyl-tRNA(fMet). The formyl group appears to play a dual role in the initiator identity of N-formylmethionyl-tRNA by promoting its recognition by IF2 and preventing the misappropriation of this tRNA by the elongation apparatus. The polypeptide is Methionyl-tRNA formyltransferase (Finegoldia magna (strain ATCC 29328 / DSM 20472 / WAL 2508) (Peptostreptococcus magnus)).